Reading from the N-terminus, the 119-residue chain is U-scoloptoxin(01)-Er1a (119 aa).

The signal sequence occupies residues 1 to 22; that stretch reads MEIHSNIILLLLIALFAIFVKM. In terms of domain architecture, Chitin-binding type-2 spans 39–97; sequence NFACSGKKPGFYADEGFDCQVYHMCSPEGQLTTYLCGPGTIFNQKKLVCDLPTNYNCAD. Cysteine 74 and cysteine 87 form a disulfide bridge.

The protein belongs to the scoloptoxin-01 family. Post-translationally, contains 3 disulfide bonds. In terms of tissue distribution, expressed by the venom gland.

The protein resides in the secreted. The sequence is that of U-scoloptoxin(01)-Er1a from Ethmostigmus rubripes (Giant centipede).